A 430-amino-acid chain; its full sequence is Adenylosuccinate synthetase (430 aa).

GTP is bound by residues 12 to 18 (GDEGKGK) and 40 to 42 (GHT). D13 (proton acceptor) is an active-site residue. Residues D13 and G40 each contribute to the Mg(2+) site. IMP contacts are provided by residues 13–16 (DEGK), 38–41 (NAGH), T130, R144, Q224, T239, and R303. H41 functions as the Proton donor in the catalytic mechanism. 299-305 (TVTGRKR) contacts substrate. GTP-binding positions include R305, 331 to 333 (KLD), and 413 to 415 (STS).

Belongs to the adenylosuccinate synthetase family. As to quaternary structure, homodimer. Mg(2+) is required as a cofactor.

The protein localises to the cytoplasm. The enzyme catalyses IMP + L-aspartate + GTP = N(6)-(1,2-dicarboxyethyl)-AMP + GDP + phosphate + 2 H(+). It participates in purine metabolism; AMP biosynthesis via de novo pathway; AMP from IMP: step 1/2. Its function is as follows. Plays an important role in the de novo pathway of purine nucleotide biosynthesis. Catalyzes the first committed step in the biosynthesis of AMP from IMP. The polypeptide is Adenylosuccinate synthetase (Cereibacter sphaeroides (strain ATCC 17029 / ATH 2.4.9) (Rhodobacter sphaeroides)).